Consider the following 608-residue polypeptide: Extracellular metalloproteinase 5 (608 aa).

Positions 1 to 20 are cleaved as a signal peptide; the sequence is MHGLLLAAAGLLSLPLHVIA. A propeptide spanning residues 21–244 is cleaved from the precursor; that stretch reads HPQPSTNLAG…VHNVVDYVSH (224 aa). Asn285 carries an N-linked (GlcNAc...) asparagine glycan. His427 contacts Zn(2+). Residue Glu428 is part of the active site. Residue His431 participates in Zn(2+) binding. N-linked (GlcNAc...) asparagine glycosylation occurs at Asn591.

Belongs to the peptidase M36 family. Zn(2+) serves as cofactor.

The protein localises to the secreted. In terms of biological role, secreted metalloproteinase probably acting as a virulence factor. This chain is Extracellular metalloproteinase 5 (MEP5), found in Trichophyton tonsurans (Scalp ringworm fungus).